A 361-amino-acid polypeptide reads, in one-letter code: Mannose-1-phosphate guanyltransferase (361 aa).

The protein belongs to the transferase hexapeptide repeat family.

It localises to the cytoplasm. The enzyme catalyses alpha-D-mannose 1-phosphate + GTP + H(+) = GDP-alpha-D-mannose + diphosphate. The protein operates within nucleotide-sugar biosynthesis; GDP-alpha-D-mannose biosynthesis; GDP-alpha-D-mannose from alpha-D-mannose 1-phosphate (GTP route): step 1/1. Functionally, involved in cell wall synthesis where it is required for glycosylation. Involved in cell cycle progression through cell-size checkpoint. The sequence is that of Mannose-1-phosphate guanyltransferase (MPG1) from Kluyveromyces lactis (strain ATCC 8585 / CBS 2359 / DSM 70799 / NBRC 1267 / NRRL Y-1140 / WM37) (Yeast).